A 469-amino-acid chain; its full sequence is Neuraminidase (469 aa).

The Intravirion portion of the chain corresponds to 1-9 (MNPNQKIIT). The helical transmembrane segment at 10–30 (IGSVSLTIATICFLMQIAILV) threads the bilayer. An involved in apical transport and lipid raft association region spans residues 11–33 (GSVSLTIATICFLMQIAILVTTV). Topologically, residues 31–469 (TTVTLHFKQY…DGADINLMPI (439 aa)) are virion surface. The segment at 36-88 (HFKQYECNSPPNNQVMLCEPTIIERNITEIVYLTNTTIEKEICPKLAEYRNWS) is hypervariable stalk region. 3 N-linked (GlcNAc...) asparagine; by host glycosylation sites follow: Asn61, Asn70, and Asn86. Residues 91-469 (QCKITGFAPF…DGADINLMPI (379 aa)) are head of neuraminidase. 8 cysteine pairs are disulfide-bonded: Cys92–Cys417, Cys124–Cys129, Cys183–Cys230, Cys232–Cys237, Cys278–Cys291, Cys280–Cys289, Cys318–Cys337, and Cys421–Cys447. Arg118 is a substrate binding site. N-linked (GlcNAc...) asparagine; by host glycosylation is present at Asn146. The active-site Proton donor/acceptor is the Asp151. Arg152 is a binding site for substrate. Residues Asn200 and Asn234 are each glycosylated (N-linked (GlcNAc...) asparagine; by host). 276–277 (EE) lines the substrate pocket. Arg292 contacts substrate. Asp293, Gly297, and Asp324 together coordinate Ca(2+). An N-linked (GlcNAc...) asparagine; by host glycan is attached at Asn329. Arg371 serves as a coordination point for substrate. A glycan (N-linked (GlcNAc...) asparagine; by host) is linked at Asn402. Tyr406 (nucleophile) is an active-site residue.

This sequence belongs to the glycosyl hydrolase 34 family. As to quaternary structure, homotetramer. It depends on Ca(2+) as a cofactor. Post-translationally, N-glycosylated.

It localises to the virion membrane. The protein resides in the host apical cell membrane. It catalyses the reaction Hydrolysis of alpha-(2-&gt;3)-, alpha-(2-&gt;6)-, alpha-(2-&gt;8)- glycosidic linkages of terminal sialic acid residues in oligosaccharides, glycoproteins, glycolipids, colominic acid and synthetic substrates.. Inhibited by the neuraminidase inhibitors zanamivir (Relenza) and oseltamivir (Tamiflu). These drugs interfere with the release of progeny virus from infected cells and are effective against all influenza strains. Resistance to neuraminidase inhibitors is quite rare. Functionally, catalyzes the removal of terminal sialic acid residues from viral and cellular glycoconjugates. Cleaves off the terminal sialic acids on the glycosylated HA during virus budding to facilitate virus release. Additionally helps virus spread through the circulation by further removing sialic acids from the cell surface. These cleavages prevent self-aggregation and ensure the efficient spread of the progeny virus from cell to cell. Otherwise, infection would be limited to one round of replication. Described as a receptor-destroying enzyme because it cleaves a terminal sialic acid from the cellular receptors. May facilitate viral invasion of the upper airways by cleaving the sialic acid moieties on the mucin of the airway epithelial cells. Likely to plays a role in the budding process through its association with lipid rafts during intracellular transport. May additionally display a raft-association independent effect on budding. Plays a role in the determination of host range restriction on replication and virulence. Sialidase activity in late endosome/lysosome traffic seems to enhance virus replication. This is Neuraminidase from Influenza A virus (strain A/Niigata/137/1996 H3N2).